The chain runs to 187 residues: UPF0340 protein str1894 (187 aa).

Belongs to the UPF0340 family.

The sequence is that of UPF0340 protein str1894 from Streptococcus thermophilus (strain CNRZ 1066).